We begin with the raw amino-acid sequence, 296 residues long: Transcription repressor OFP3 (296 aa).

Disordered regions lie at residues 27-115 (MSRS…SANA) and 131-196 (PSDQ…AHSS). A compositionally biased stretch (polar residues) spans 60–69 (LSSTAHHPQA). Residues 78–88 (SFKRKIKRKTV) show a composition bias toward basic residues. Residues 92–115 (SSRLKLSTSSSLNHRSKSSSSANA) show a composition bias toward low complexity. A compositionally biased stretch (basic and acidic residues) spans 136 to 159 (FVHDPEPHSSIDIKDELSVRKLDD). One can recognise an OVATE domain in the interval 228 to 287 (IVLSSVDPEKDFRESMVEMIMENKMREQKDLEDLLACYLSLNSSEYHDVIIKAFENTWLH).

Interacts with BLH1, BLH3, KNAT5 and KNAT7.

The protein localises to the nucleus. Functionally, transcriptional repressor that may regulate multiple aspects of plant growth and development through the regulation of BEL1-LIKE (BLH) and KNOX TALE (KNAT) homeodomain transcription factors. The chain is Transcription repressor OFP3 (OFP3) from Arabidopsis thaliana (Mouse-ear cress).